Here is a 210-residue protein sequence, read N- to C-terminus: Thymidylate kinase (210 aa).

Residue 10 to 17 coordinates ATP; sequence GPEGAGKS.

It belongs to the thymidylate kinase family.

The catalysed reaction is dTMP + ATP = dTDP + ADP. In terms of biological role, phosphorylation of dTMP to form dTDP in both de novo and salvage pathways of dTTP synthesis. The protein is Thymidylate kinase of Pseudomonas putida (strain ATCC 700007 / DSM 6899 / JCM 31910 / BCRC 17059 / LMG 24140 / F1).